The following is a 220-amino-acid chain: Aspartic protease inhibitor 2 (220 aa).

The signal sequence occupies residues 1-23; sequence MMKCLFLLCLCLLPIVVFSSTFT. The propeptide occupies 24 to 32; sequence SQNLIDLPS. Residues 26–31 carry the Vacuolar targeting signal motif; that stretch reads NLIDLP. A glycan (N-linked (GlcNAc...) asparagine) is linked at Asn-51. Disulfide bonds link Cys-80–Cys-125 and Cys-174–Cys-185.

Belongs to the protease inhibitor I3 (leguminous Kunitz-type inhibitor) family. In terms of tissue distribution, tubers.

The protein localises to the vacuole. Functionally, inhibitor of cathepsin D (aspartic protease). May also inhibit trypsin and chymotrypsin (serine proteases). Protects the plant by inhibiting proteases of invading organisms. This chain is Aspartic protease inhibitor 2, found in Solanum tuberosum (Potato).